An 83-amino-acid polypeptide reads, in one-letter code: Large ribosomal subunit protein bL31B (83 aa).

Belongs to the bacterial ribosomal protein bL31 family. Type B subfamily. Part of the 50S ribosomal subunit.

The chain is Large ribosomal subunit protein bL31B from Tropheryma whipplei (strain TW08/27) (Whipple's bacillus).